Consider the following 283-residue polypeptide: 2-dehydro-3-deoxyphosphooctonate aldolase (283 aa).

Belongs to the KdsA family.

It localises to the cytoplasm. It catalyses the reaction D-arabinose 5-phosphate + phosphoenolpyruvate + H2O = 3-deoxy-alpha-D-manno-2-octulosonate-8-phosphate + phosphate. It functions in the pathway carbohydrate biosynthesis; 3-deoxy-D-manno-octulosonate biosynthesis; 3-deoxy-D-manno-octulosonate from D-ribulose 5-phosphate: step 2/3. The protein operates within bacterial outer membrane biogenesis; lipopolysaccharide biosynthesis. This is 2-dehydro-3-deoxyphosphooctonate aldolase from Shewanella frigidimarina (strain NCIMB 400).